Reading from the N-terminus, the 312-residue chain is MRVLLAPMEGVLDALVRELLTEVNDYDLCITEFVRVVDQLLPVKVFHRICPELHHASRTPSGTPVRIQLLGQHPQWLAENAARATALGSYGVDLNCGCPSKVVNGSGGGATLLKDPELIYQGAKAMRAAVPSHLPVTVKVRLGWDSGDRKFEIADAVQQAGASELVVHGRTKAQGYRAEHIDWQAIGEIRQRLTIPVIANGEILDWQSAQACMATSGCDAVMIGRGALNIPNLSRVVKYNEPRMPWPEVVTLLQKYTRLEKQGDTGLYHVARIKQWLGYLRKEYIEATELFQSIRALNRSSEIARAIQAIKI.

Residues 7-9 (PME) and Gln68 each bind FMN. The active-site Proton donor is the Cys98. Residues Lys139, 200–202 (NGE), and 224–225 (GR) each bind FMN.

It belongs to the Dus family. DusC subfamily. FMN serves as cofactor.

The enzyme catalyses 5,6-dihydrouridine(16) in tRNA + NADP(+) = uridine(16) in tRNA + NADPH + H(+). It carries out the reaction 5,6-dihydrouridine(16) in tRNA + NAD(+) = uridine(16) in tRNA + NADH + H(+). In terms of biological role, catalyzes the synthesis of 5,6-dihydrouridine (D), a modified base found in the D-loop of most tRNAs, via the reduction of the C5-C6 double bond in target uridines. Specifically modifies U16 in tRNAs. This is tRNA-dihydrouridine(16) synthase from Salmonella typhimurium (strain LT2 / SGSC1412 / ATCC 700720).